We begin with the raw amino-acid sequence, 368 residues long: L-cysteine desulfhydrase Cds1 (368 aa).

Position 67 is an N6-(pyridoxal phosphate)lysine (K67). Pyridoxal 5'-phosphate is bound by residues 203–207 (GTGGT) and S299.

This sequence belongs to the cysteine synthase/cystathionine beta-synthase family. Cds1 subfamily. It depends on pyridoxal 5'-phosphate as a cofactor.

It is found in the cytoplasm. The enzyme catalyses L-cysteine + H2O = hydrogen sulfide + pyruvate + NH4(+) + H(+). A cysteine desulfhydrase that generates hydrogen sulfide, H(2)S. The H(2)S produced by this enzyme stimulates respiration in M.tuberculosis, mediated primarily via cytochrome bd with a lesser contribution from cytochrome bc1/aa3. H(2)S modulates the balance between respiration and glycolysis, and also contributes to redox homeostasis. Probably eliminates toxic levels of Cys (which can induce oxidative stress). In Mycobacterium tuberculosis (strain ATCC 25177 / H37Ra), this protein is L-cysteine desulfhydrase Cds1.